We begin with the raw amino-acid sequence, 348 residues long: Flavonol synthase/flavanone 3-hydroxylase (348 aa).

Positions 209–309 (EIVYLLKINY…RMSWPVFLEP (101 aa)) constitute a Fe2OG dioxygenase domain. H234, D236, and H290 together coordinate Fe cation.

Belongs to the iron/ascorbate-dependent oxidoreductase family. The cofactor is L-ascorbate. Fe cation serves as cofactor.

The protein localises to the cytoplasm. The catalysed reaction is a (2R,3R)-dihydroflavonol + 2-oxoglutarate + O2 = a flavonol + succinate + CO2 + H2O. The enzyme catalyses a (2S)-flavan-4-one + 2-oxoglutarate + O2 = a (2R,3R)-dihydroflavonol + succinate + CO2. It participates in secondary metabolite biosynthesis; flavonoid biosynthesis. In terms of biological role, catalyzes the formation of flavonols from dihydroflavonols. It can act on dihydrokaempferol to produce kaempferol, on dihydroquercetin to produce quercitin and on dihydromyricetin to produce myricetin. The sequence is that of Flavonol synthase/flavanone 3-hydroxylase (FL) from Petunia hybrida (Petunia).